A 707-amino-acid chain; its full sequence is U-box domain-containing protein 2 (707 aa).

A U-box domain is found at 239 to 313 (RVPSDFRCSL…ASWCETNNVY (75 aa)). ARM repeat units follow at residues 453–492 (TDNR…NLSI), 494–534 (DNNK…SLSV), 536–575 (EEYK…NLSI), 577–615 (HENK…NLAT), and 617–656 (REGK…QLCT).

It catalyses the reaction S-ubiquitinyl-[E2 ubiquitin-conjugating enzyme]-L-cysteine + [acceptor protein]-L-lysine = [E2 ubiquitin-conjugating enzyme]-L-cysteine + N(6)-ubiquitinyl-[acceptor protein]-L-lysine.. It functions in the pathway protein modification; protein ubiquitination. Functionally, functions as an E3 ubiquitin ligase. The chain is U-box domain-containing protein 2 (PUB2) from Arabidopsis thaliana (Mouse-ear cress).